A 442-amino-acid chain; its full sequence is Enolase 1 (442 aa).

Residues 73–140 form a binds human collagen region; it reads KLIAKEIVGY…YNYLGGFNAH (68 aa). Glutamine 163 lines the (2R)-2-phosphoglycerate pocket. Residue glutamate 205 is the Proton donor of the active site. Mg(2+) contacts are provided by aspartate 242, glutamate 290, and aspartate 317. Residues lysine 342, arginine 371, serine 372, and lysine 393 each contribute to the (2R)-2-phosphoglycerate site. The Proton acceptor role is filled by lysine 342.

Belongs to the enolase family. Mg(2+) serves as cofactor.

It is found in the cytoplasm. The protein localises to the secreted. The protein resides in the cell surface. It carries out the reaction (2R)-2-phosphoglycerate = phosphoenolpyruvate + H2O. It participates in carbohydrate degradation; glycolysis; pyruvate from D-glyceraldehyde 3-phosphate: step 4/5. Its function is as follows. Catalyzes the reversible conversion of 2-phosphoglycerate (2-PG) into phosphoenolpyruvate (PEP). It is essential for the degradation of carbohydrates via glycolysis. Functionally, 'Moonlights' as a collagen receptor. Binds host (human) collagen, which may contribute to pathogenicity. This is Enolase 1 from Lactiplantibacillus plantarum (strain ATCC BAA-793 / NCIMB 8826 / WCFS1) (Lactobacillus plantarum).